The chain runs to 186 residues: Protein C (186 aa).

A compositionally biased stretch (polar residues) spans 1 to 12; sequence MSKTDWNASGPS. A disordered region spans residues 1-43; sequence MSKTDWNASGPSRPSPSAHWPSGKLWQHGQKYQTTQDRSRPPA.

Belongs to the morbillivirus protein C family. In terms of assembly, interacts with the phosphoprotein (via C-terminus); this interaction allows C to associate with the ribonucleocapsid.

Its subcellular location is the host nucleus. The protein resides in the host cytoplasmic vesicle. Functionally, ribonucleocapsid-associated protein that interacts with the phosphoprotein (P), thereby increasing replication accuracy and processivity of the polymerase complex. The chain is Protein C (P/V/C) from Homo sapiens (Human).